The sequence spans 169 residues: Endoribonuclease YbeY (169 aa).

Zn(2+) is bound by residues His-135, His-139, and His-145.

This sequence belongs to the endoribonuclease YbeY family. Requires Zn(2+) as cofactor.

The protein resides in the cytoplasm. Single strand-specific metallo-endoribonuclease involved in late-stage 70S ribosome quality control and in maturation of the 3' terminus of the 16S rRNA. The chain is Endoribonuclease YbeY from Lachnospira eligens (strain ATCC 27750 / DSM 3376 / VPI C15-48 / C15-B4) (Eubacterium eligens).